The sequence spans 1045 residues: E3 ubiquitin-protein ligase Topors (1045 aa).

A disordered region spans residues 1–35; it reads MGSQPPLGSPLSREEGEAPPPAPASEGRRRSRRVR. The segment at 1-195 is E3 ubiquitin-protein ligase activity; that stretch reads MGSQPPLGSP…RERNASVYSP (195 aa). The segment at 51–374 is required for DNA-binding; it reads ELAASAPARP…MAAFDQHANY (324 aa). Residues lysine 73, lysine 76, lysine 83, and lysine 88 each participate in a glycyl lysine isopeptide (Lys-Gly) (interchain with G-Cter in SUMO2) cross-link. A Phosphoserine modification is found at serine 98. The segment at 103–142 adopts an RING-type zinc-finger fold; it reads CPICLDRFDNVSYLDRCLHKFCFRCVQEWSKNKAECPLCK. A Glycyl lysine isopeptide (Lys-Gly) (interchain with G-Cter in SUMO2) cross-link involves residue lysine 159. Serine 194 bears the Phosphoserine mark. Residue lysine 249 forms a Glycyl lysine isopeptide (Lys-Gly) (interchain with G-Cter in SUMO2) linkage. The interval 437 to 574 is required for sumoylation and localization to discrete nuclear foci; it reads SLLNTSDSSD…STSLSSPRNL (138 aa). The interaction with SUMO1 stretch occupies residues 437 to 654; sequence SLLNTSDSSD…RSRTRDSSWS (218 aa). The disordered stretch occupies residues 442 to 475; it reads SDSSDEELVTGGATSQIQGVQTNDDLNNDSDDSS. Positions 453-463 are enriched in polar residues; sequence GATSQIQGVQT. The interaction with p53/TP53 stretch occupies residues 456-731; it reads SQIQGVQTND…RRTLSRAHYS (276 aa). The tract at residues 456-882 is interaction with TOP1; that stretch reads SQIQGVQTND…GKATDTTKHH (427 aa). Serine 499 carries the post-translational modification Phosphoserine. The tract at residues 511–692 is disordered; that stretch reads ETVKTQEQEQ…RSRNRDRYYL (182 aa). Residues 521-534 are compositionally biased toward low complexity; sequence SYSSGDSDVSRCSS. Basic and acidic residues predominate over residues 539-565; sequence LGKDEQINKGHCDSSTRIKSKKEEKRS. Lysine 560 is covalently cross-linked (Glycyl lysine isopeptide (Lys-Gly) (interchain with G-Cter in SUMO)). The span at 566 to 578 shows a compositional bias: polar residues; that stretch reads TSLSSPRNLNSSV. At serine 585 the chain carries Phosphoserine. 3 stretches are compositionally biased toward basic residues: residues 588-597, 613-630, and 637-647; these read NHRHRKRGRS, KNHR…KRSR, and PRGRRDKKRSR. Positions 654–669 are enriched in low complexity; that stretch reads SRRSQTLSLSSESTSR. Lysine 701 is covalently cross-linked (Glycyl lysine isopeptide (Lys-Gly) (interchain with G-Cter in SUMO2)). The segment at 713 to 936 is disordered; that stretch reads RDGYESSYRR…DNSGPQDPLQ (224 aa). Serine 718 is subject to Phosphoserine; by PLK1. A compositionally biased stretch (basic residues) spans 721–730; the sequence is RRRTLSRAHY. Polar residues predominate over residues 731-747; that stretch reads SRQSSSPEFRVQSFSER. The residue at position 734 (serine 734) is a Phosphoserine. Basic and acidic residues-rich tracts occupy residues 755–766 and 816–825; these read NHSERKYYYYER and FASKAKDSHY. Residues lysine 819 and lysine 837 each participate in a glycyl lysine isopeptide (Lys-Gly) (interchain with G-Cter in SUMO2) cross-link. The span at 854–863 shows a compositional bias: basic residues; that stretch reads KHKRRKRKTR. Positions 854 to 917 are interaction with UBE2I; it reads KHKRRKRKTR…ITIDSDSDKD (64 aa). Serine 864 and serine 866 each carry phosphoserine. The segment covering 880 to 897 has biased composition (basic residues); it reads KHHKKKKKKHKKKHKKHH. Serine 912, serine 914, and serine 1028 each carry phosphoserine. Residues 913–923 show a composition bias toward basic and acidic residues; the sequence is DSDKDSEVKED.

As to quaternary structure, interacts with PARK7/DJ-1. Interacts with TOP1. Interacts with p53/TP53; can both ubiquitinate and sumoylate p53/TP53. Interacts with the SUMO1 conjugating enzyme UBE2I. Interacts with SUMO1. Interacts with NKX3-1; polyubiquitinates NKX3-1 and induces its proteasomal degradation. Interacts with SIN3A; sumoylates SIN3A. Interacts with IKBKE; induced by DNA damage. Post-translationally, phosphorylation at Ser-98 regulates the E3 ubiquitin-protein ligase activity but not the SUMO1-protein ligase activity. Phosphorylation at Ser-718 increases the E3 ubiquitin-protein ligase activity versus the SUMO1-protein ligase activity resulting in increased p53/TP53 ubiquitination and degradation. In terms of processing, sumoylated. In terms of tissue distribution, expressed at highest levels in testis and at lower levels in adrenal gland, bone marrow, brain, colon, heart, kidney, liver, muscle, ovary, pancreas, placenta, prostate, skeletal muscle, skin, small intestine, spleen, stomach, testis, thymus, thyroid and uterus. Expressed in the alveolar epithelium of the lung. Expression is commonly decreased in colon adenocarcinomas and lung cancers.

The protein localises to the nucleus. It is found in the PML body. It carries out the reaction S-ubiquitinyl-[E2 ubiquitin-conjugating enzyme]-L-cysteine + [acceptor protein]-L-lysine = [E2 ubiquitin-conjugating enzyme]-L-cysteine + N(6)-ubiquitinyl-[acceptor protein]-L-lysine.. Functionally, functions as an E3 ubiquitin-protein ligase and as an E3 SUMO1-protein ligase. Probable tumor suppressor involved in cell growth, cell proliferation and apoptosis that regulates p53/TP53 stability through ubiquitin-dependent degradation. May regulate chromatin modification through sumoylation of several chromatin modification-associated proteins. May be involved in DNA damage-induced cell death through IKBKE sumoylation. This chain is E3 ubiquitin-protein ligase Topors (TOPORS), found in Homo sapiens (Human).